We begin with the raw amino-acid sequence, 451 residues long: 2-succinylbenzoate--CoA ligase (451 aa).

This sequence belongs to the ATP-dependent AMP-binding enzyme family. MenE subfamily.

The catalysed reaction is 2-succinylbenzoate + ATP + CoA = 2-succinylbenzoyl-CoA + AMP + diphosphate. Its pathway is quinol/quinone metabolism; 1,4-dihydroxy-2-naphthoate biosynthesis; 1,4-dihydroxy-2-naphthoate from chorismate: step 5/7. It participates in quinol/quinone metabolism; menaquinone biosynthesis. Its function is as follows. Converts 2-succinylbenzoate (OSB) to 2-succinylbenzoyl-CoA (OSB-CoA). The polypeptide is 2-succinylbenzoate--CoA ligase (Escherichia coli (strain K12)).